The chain runs to 451 residues: Exodeoxyribonuclease 7 large subunit (451 aa).

The protein belongs to the XseA family. In terms of assembly, heterooligomer composed of large and small subunits.

Its subcellular location is the cytoplasm. It carries out the reaction Exonucleolytic cleavage in either 5'- to 3'- or 3'- to 5'-direction to yield nucleoside 5'-phosphates.. Its function is as follows. Bidirectionally degrades single-stranded DNA into large acid-insoluble oligonucleotides, which are then degraded further into small acid-soluble oligonucleotides. In Neisseria meningitidis serogroup B (strain ATCC BAA-335 / MC58), this protein is Exodeoxyribonuclease 7 large subunit.